A 522-amino-acid polypeptide reads, in one-letter code: Probable cytosolic Fe-S cluster assembly factor narfl (522 aa).

Residues Cys-26, Cys-73, Cys-76, Cys-79, Cys-205, Cys-281, Cys-439, and Cys-443 each contribute to the [4Fe-4S] cluster site.

It belongs to the NARF family.

In terms of biological role, component of the cytosolic iron-sulfur (Fe/S) protein assembly machinery. Required for maturation of extramitochondrial Fe/S proteins. The chain is Probable cytosolic Fe-S cluster assembly factor narfl (narfl) from Dictyostelium discoideum (Social amoeba).